The primary structure comprises 266 residues: 3-oxoadipate enol-lactonase 1 (266 aa).

The AB hydrolase-1 domain occupies 28-250; sequence PAIVFSNSLG…DASHLSNIEQ (223 aa).

The catalysed reaction is (4,5-dihydro-5-oxofuran-2-yl)-acetate + H2O = 3-oxoadipate + H(+). The protein operates within aromatic compound metabolism; beta-ketoadipate pathway; 3-oxoadipate from 5-oxo-4,5-dihydro-2-furylacetate: step 1/1. This is 3-oxoadipate enol-lactonase 1 (pcaD) from Acinetobacter baylyi (strain ATCC 33305 / BD413 / ADP1).